The following is a 314-amino-acid chain: Methionyl-tRNA formyltransferase (314 aa).

110–113 (SLLP) is a (6S)-5,6,7,8-tetrahydrofolate binding site.

This sequence belongs to the Fmt family.

The enzyme catalyses L-methionyl-tRNA(fMet) + (6R)-10-formyltetrahydrofolate = N-formyl-L-methionyl-tRNA(fMet) + (6S)-5,6,7,8-tetrahydrofolate + H(+). Attaches a formyl group to the free amino group of methionyl-tRNA(fMet). The formyl group appears to play a dual role in the initiator identity of N-formylmethionyl-tRNA by promoting its recognition by IF2 and preventing the misappropriation of this tRNA by the elongation apparatus. The chain is Methionyl-tRNA formyltransferase from Bacillus cytotoxicus (strain DSM 22905 / CIP 110041 / 391-98 / NVH 391-98).